Reading from the N-terminus, the 750-residue chain is Photosystem I P700 chlorophyll a apoprotein A1 (750 aa).

8 helical membrane-spanning segments follow: residues 70-93 (VFSA…FHGA), 156-179 (LYCT…FHYH), 195-219 (LNHH…HVSL), 291-309 (IAHH…GHMY), 346-369 (WHAQ…HHMY), 385-411 (LSLF…IFMV), 433-455 (AIIS…LYIH), and 531-549 (FLVH…LILL). Positions 573 and 582 each coordinate [4Fe-4S] cluster. The next 2 membrane-spanning stretches (helical) occupy residues 589–610 (HVFL…HFSW) and 664–686 (LSAY…MFLF). His-675 serves as a coordination point for chlorophyll a'. Positions 683 and 691 each coordinate chlorophyll a. Trp-692 provides a ligand contact to phylloquinone. The chain crosses the membrane as a helical span at residues 724 to 744 (AVGVTHYLLGGIATTWAFFLA).

It belongs to the PsaA/PsaB family. In terms of assembly, the PsaA/B heterodimer binds the P700 chlorophyll special pair and subsequent electron acceptors. PSI consists of a core antenna complex that captures photons, and an electron transfer chain that converts photonic excitation into a charge separation. The eukaryotic PSI reaction center is composed of at least 11 subunits. P700 is a chlorophyll a/chlorophyll a' dimer, A0 is one or more chlorophyll a, A1 is one or both phylloquinones and FX is a shared 4Fe-4S iron-sulfur center. serves as cofactor.

The protein resides in the plastid. It localises to the chloroplast thylakoid membrane. The enzyme catalyses reduced [plastocyanin] + hnu + oxidized [2Fe-2S]-[ferredoxin] = oxidized [plastocyanin] + reduced [2Fe-2S]-[ferredoxin]. Functionally, psaA and PsaB bind P700, the primary electron donor of photosystem I (PSI), as well as the electron acceptors A0, A1 and FX. PSI is a plastocyanin-ferredoxin oxidoreductase, converting photonic excitation into a charge separation, which transfers an electron from the donor P700 chlorophyll pair to the spectroscopically characterized acceptors A0, A1, FX, FA and FB in turn. Oxidized P700 is reduced on the lumenal side of the thylakoid membrane by plastocyanin. The polypeptide is Photosystem I P700 chlorophyll a apoprotein A1 (Phalaenopsis aphrodite subsp. formosana (Moth orchid)).